Here is a 247-residue protein sequence, read N- to C-terminus: Virulence plasmid protein pGP6-D (247 aa).

Belongs to the UPF0137 (pGP6-D) family.

This Chlamydia trachomatis protein is Virulence plasmid protein pGP6-D.